Consider the following 546-residue polypeptide: ATP-dependent RNA helicase DBP2 (546 aa).

Residues 1-56 form a disordered region; that stretch reads MTYGGRDQQYNKTNYKSRGGDFRGGRNSDRNSYNDRPQGGNYRGGFGGRSNYNQPQ. Arg-18 and Arg-43 each carry omega-N-methylarginine. The segment covering 18–33 has biased composition (basic and acidic residues); sequence RGGDFRGGRNSDRNSY. 2 positions are modified to phosphoserine: Ser-88 and Ser-90. Residues 113 to 141 carry the Q motif motif; sequence TTFDEAGFPDYVLNEVKAEGFDKPTGIQC. The 176-residue stretch at 144-319 folds into the Helicase ATP-binding domain; that stretch reads WPMALSGRDM…ADYLNDPIQV (176 aa). 157–164 is an ATP binding site; the sequence is AATGSGKT. The DEAD box signature appears at 267–270; that stretch reads DEAD. A Helicase C-terminal domain is found at 347–494; sequence RLNKYLETAS…NIPPELLKYD (148 aa). Residue Lys-474 forms a Glycyl lysine isopeptide (Lys-Gly) (interchain with G-Cter in ubiquitin) linkage. Positions 493–546 are disordered; the sequence is YDRRSYGGGHPRYGGGRGGRGGYGRRGGYGGGRGGYGGNRQRDGGWGNRGRSNY. The span at 498–540 shows a compositional bias: gly residues; the sequence is YGGGHPRYGGGRGGRGGYGRRGGYGGGRGGYGGNRQRDGGWGN. Residues 505-530 are RNA-binding RGG-box; it reads YGGGRGGRGGYGRRGGYGGGRGGYGG. Dimethylated arginine; alternate occurs at positions 509, 512, 518, and 525. Residues Arg-509, Arg-512, Arg-518, and Arg-525 each carry the omega-N-methylarginine; alternate modification.

The protein belongs to the DEAD box helicase family. DDX5/DBP2 subfamily. As to quaternary structure, interacts with UPF1. Associates with polysomes.

It localises to the cytoplasm. It is found in the nucleus. The catalysed reaction is ATP + H2O = ADP + phosphate + H(+). ATP-dependent RNA helicase involved nonsense-mediated mRNA decay and ribosome biogenesis through rRNA processing. Associates directly with chromatin, correlating with transcriptional activity. Required for assembly of mRNA-binding proteins YRA1, NAB2, and MEX67 onto poly(A)+ RNA. The chain is ATP-dependent RNA helicase DBP2 from Saccharomyces cerevisiae (strain ATCC 204508 / S288c) (Baker's yeast).